We begin with the raw amino-acid sequence, 73 residues long: UPF0346 protein SH1485 (73 aa).

The protein belongs to the UPF0346 family.

This chain is UPF0346 protein SH1485, found in Staphylococcus haemolyticus (strain JCSC1435).